The sequence spans 129 residues: UPF0102 protein Cag_1992 (129 aa).

It belongs to the UPF0102 family.

The protein is UPF0102 protein Cag_1992 of Chlorobium chlorochromatii (strain CaD3).